The primary structure comprises 115 residues: Ribonuclease P protein component (115 aa).

The protein belongs to the RnpA family. Consists of a catalytic RNA component (M1 or rnpB) and a protein subunit.

The enzyme catalyses Endonucleolytic cleavage of RNA, removing 5'-extranucleotides from tRNA precursor.. Functionally, RNaseP catalyzes the removal of the 5'-leader sequence from pre-tRNA to produce the mature 5'-terminus. It can also cleave other RNA substrates such as 4.5S RNA. The protein component plays an auxiliary but essential role in vivo by binding to the 5'-leader sequence and broadening the substrate specificity of the ribozyme. The polypeptide is Ribonuclease P protein component (Macrococcus caseolyticus (strain JCSC5402) (Macrococcoides caseolyticum)).